Reading from the N-terminus, the 127-residue chain is MSLLRNRLQDLPALCLCVLVLACIGACQSEAYEGTPSPPPKLKMSHWSLVTGRMKELLEPVVNRTRDRWQWFWSPSTFRGFMQTYYDDHLRDLGPRTKAWLLKSKESLLNKTHSLCPRIVCGDKDQG.

A signal peptide spans 1-27 (MSLLRNRLQDLPALCLCVLVLACIGAC).

The protein belongs to the apolipoprotein C4 family.

It localises to the secreted. Its function is as follows. May participate in lipoprotein metabolism. The sequence is that of Apolipoprotein C-IV (APOC4) from Chlorocebus sabaeus (Green monkey).